The chain runs to 60 residues: Large ribosomal subunit protein uL30 (60 aa).

It belongs to the universal ribosomal protein uL30 family. In terms of assembly, part of the 50S ribosomal subunit.

In Levilactobacillus brevis (strain ATCC 367 / BCRC 12310 / CIP 105137 / JCM 1170 / LMG 11437 / NCIMB 947 / NCTC 947) (Lactobacillus brevis), this protein is Large ribosomal subunit protein uL30.